Consider the following 80-residue polypeptide: Small ribosomal subunit protein bS16 (80 aa).

This sequence belongs to the bacterial ribosomal protein bS16 family.

The protein is Small ribosomal subunit protein bS16 of Wigglesworthia glossinidia brevipalpis.